Reading from the N-terminus, the 290-residue chain is Diaminopimelate epimerase (290 aa).

Substrate contacts are provided by Asn-17, Gln-49, and Asn-69. Catalysis depends on Cys-78, which acts as the Proton donor. Substrate contacts are provided by residues 79–80 (GN), Asn-166, Asn-199, and 217–218 (ER). The active-site Proton acceptor is the Cys-226. 227-228 (GS) is a substrate binding site.

Belongs to the diaminopimelate epimerase family. As to quaternary structure, homodimer.

The protein localises to the cytoplasm. The catalysed reaction is (2S,6S)-2,6-diaminopimelate = meso-2,6-diaminopimelate. Its pathway is amino-acid biosynthesis; L-lysine biosynthesis via DAP pathway; DL-2,6-diaminopimelate from LL-2,6-diaminopimelate: step 1/1. Catalyzes the stereoinversion of LL-2,6-diaminopimelate (L,L-DAP) to meso-diaminopimelate (meso-DAP), a precursor of L-lysine and an essential component of the bacterial peptidoglycan. The protein is Diaminopimelate epimerase of Nitrobacter hamburgensis (strain DSM 10229 / NCIMB 13809 / X14).